The following is a 252-amino-acid chain: Aspartate/glutamate leucyltransferase (252 aa).

It belongs to the R-transferase family. Bpt subfamily.

The protein resides in the cytoplasm. The enzyme catalyses N-terminal L-glutamyl-[protein] + L-leucyl-tRNA(Leu) = N-terminal L-leucyl-L-glutamyl-[protein] + tRNA(Leu) + H(+). It catalyses the reaction N-terminal L-aspartyl-[protein] + L-leucyl-tRNA(Leu) = N-terminal L-leucyl-L-aspartyl-[protein] + tRNA(Leu) + H(+). Functions in the N-end rule pathway of protein degradation where it conjugates Leu from its aminoacyl-tRNA to the N-termini of proteins containing an N-terminal aspartate or glutamate. The sequence is that of Aspartate/glutamate leucyltransferase from Agrobacterium fabrum (strain C58 / ATCC 33970) (Agrobacterium tumefaciens (strain C58)).